The sequence spans 152 residues: Aspartate 1-decarboxylase (152 aa).

Serine 24 serves as the catalytic Schiff-base intermediate with substrate; via pyruvic acid. Residue serine 24 is modified to Pyruvic acid (Ser). Threonine 56 contacts substrate. The active-site Proton donor is tyrosine 57. 72 to 74 contacts substrate; sequence GAA.

Belongs to the PanD family. Heterooctamer of four alpha and four beta subunits. The cofactor is pyruvate. Post-translationally, is synthesized initially as an inactive proenzyme, which is activated by self-cleavage at a specific serine bond to produce a beta-subunit with a hydroxyl group at its C-terminus and an alpha-subunit with a pyruvoyl group at its N-terminus.

It is found in the cytoplasm. It catalyses the reaction L-aspartate + H(+) = beta-alanine + CO2. Its pathway is cofactor biosynthesis; (R)-pantothenate biosynthesis; beta-alanine from L-aspartate: step 1/1. Its function is as follows. Catalyzes the pyruvoyl-dependent decarboxylation of aspartate to produce beta-alanine. The sequence is that of Aspartate 1-decarboxylase from Rhodospirillum centenum (strain ATCC 51521 / SW).